The chain runs to 296 residues: uncharacterized protein (296 aa).

An N-terminal signal peptide occupies residues 1–20 (MKKLLLIIITVFFAFNVAQA).

This is an uncharacterized protein from Rickettsia felis (strain ATCC VR-1525 / URRWXCal2) (Rickettsia azadi).